The following is a 286-amino-acid chain: NAD(P)H azoreductase (286 aa).

NADP(+) contacts are provided by residues 6-11 (GGTGTI), Arg-31, and 136-141 (GFFMQN).

Belongs to the NmrA-type oxidoreductase family. Azoreductase type 3 subfamily. Monomer.

Catalyzes the reductive cleavage of azo bond in aromatic azo compounds to the corresponding amines. Uses preferentially NADPH rather than NADH as an electron donor for its activity. The enzyme reductively cleaved Orange II and carboxy-Orange II, and can also reduce several sulfonated structural analogs, which carry a hydroxy group in the 2 position of the naphthol ring. This chain is NAD(P)H azoreductase (azoB), found in Xenophilus azovorans.